The sequence spans 200 residues: MSGFKQHTGLVVPLDTANIDTDAIIPKQFLQKVNRTGFGKHLFHDWRFLDDAGQQPNPEFVMNAPRYQGASILLARENFGCGSSREHAPWALADYGIQVMIAPSFADIFYGNSINNQMIPVRLTDIEVDEIFQFVEANEGAEVAVDLEAMLVSANGKQYSFEIDEFRRHCLLNGLDNIGLTLQHADKISEYEAKIPNFLK.

This sequence belongs to the LeuD family. LeuD type 1 subfamily. As to quaternary structure, heterodimer of LeuC and LeuD.

It carries out the reaction (2R,3S)-3-isopropylmalate = (2S)-2-isopropylmalate. It participates in amino-acid biosynthesis; L-leucine biosynthesis; L-leucine from 3-methyl-2-oxobutanoate: step 2/4. Catalyzes the isomerization between 2-isopropylmalate and 3-isopropylmalate, via the formation of 2-isopropylmaleate. In Aliivibrio salmonicida (strain LFI1238) (Vibrio salmonicida (strain LFI1238)), this protein is 3-isopropylmalate dehydratase small subunit.